The primary structure comprises 107 residues: Guanylin (107 aa).

An N-terminal signal peptide occupies residues 1-20 (MNTFLLSALCLGAWAALVGA). The propeptide occupies 21–92 (VTVQDGDFSF…LNRLAVIAQD (72 aa)). 3 disulfide bridges follow: C61–C74, C96–C104, and C99–C107.

It belongs to the guanylin family.

It is found in the secreted. Functionally, endogenous activator of intestinal guanylate cyclase. It stimulates this enzyme through the same receptor binding region as the heat-stable enterotoxins. The protein is Guanylin (GUCA2A) of Cavia porcellus (Guinea pig).